We begin with the raw amino-acid sequence, 443 residues long: 23S rRNA (uracil(1939)-C(5))-methyltransferase RlmD (443 aa).

A TRAM domain is found at 8-66 (KPLPAEPIAAHIESFAHDGKGIAHVDGRVVFVDGALPGEDVTFVYTEIKRDYAAGRVVE). [4Fe-4S] cluster is bound by residues Cys-79, Cys-85, Cys-88, and Cys-167. Gln-276, Phe-305, Asn-310, Glu-326, Asp-353, and Asp-374 together coordinate S-adenosyl-L-methionine. The active-site Nucleophile is Cys-400.

It belongs to the class I-like SAM-binding methyltransferase superfamily. RNA M5U methyltransferase family. RlmD subfamily.

It carries out the reaction uridine(1939) in 23S rRNA + S-adenosyl-L-methionine = 5-methyluridine(1939) in 23S rRNA + S-adenosyl-L-homocysteine + H(+). Catalyzes the formation of 5-methyl-uridine at position 1939 (m5U1939) in 23S rRNA. This chain is 23S rRNA (uracil(1939)-C(5))-methyltransferase RlmD, found in Methylococcus capsulatus (strain ATCC 33009 / NCIMB 11132 / Bath).